Consider the following 595-residue polypeptide: CDPK-related kinase 3 (595 aa).

A disordered region spans residues 1–131 (MGQCYGKVNQ…GTEPEQSLDK (131 aa)). A lipid anchor (N-myristoyl glycine) is attached at Gly-2. The span at 20 to 37 (NTTTYVVSGDGNQIQPLT) shows a compositional bias: polar residues. Basic and acidic residues predominate over residues 111–124 (KPKEGPIPEERGTE). In terms of domain architecture, Protein kinase spans 143-405 (YELGKEVGRG…AVQALTHPWL (263 aa)). ATP contacts are provided by residues 149-157 (VGRGHFGHT) and Lys-175. The active-site Proton acceptor is the Asp-271. Ser-311 carries the phosphoserine modification. Ser-353 is modified (phosphoserine; by CPK1 and CPK34). The segment at 409–439 (SRVIPLDILIYKLVKAYLHATPLRRAALKAL) is autoinhibitory domain. Residues 428 to 448 (ATPLRRAALKALAKALTENEL) form a calmodulin binding (CaMBD) region. EF-hand domains follow at residues 446 to 482 (NELVYLRAQFMLLGPNKDGSVSLENFKTALMQNATDA), 483 to 518 (MRESRVPEILHTMESLAYRKMYFEEFCAAAISIHQL), 519 to 558 (EAVDAWEEIATAGFQHFETEGNRVITIEELARELNVGASA), and 559 to 588 (YGHLRDWVRSSDGKLSYLGFTKFLHGVTLR). 10 residues coordinate Ca(2+): Asn-461, Asp-463, Ser-465, Lys-502, Glu-507, Asn-540, Glu-547, Ser-568, Asp-570, and Lys-572. Ser-574 carries the phosphoserine modification.

Belongs to the protein kinase superfamily. Ser/Thr protein kinase family. CDPK subfamily. Binds calmodulin (CaM) in a calcium-dependent manner. Interacts with GLN1-1. Autophosphorylated. Ubiquitously expressed with higher levels in siliques and roots, especially at the root cap. Particularly present in vascular bundles of stems and leaves.

The protein resides in the cytoplasm. The protein localises to the membrane. The enzyme catalyses L-seryl-[protein] + ATP = O-phospho-L-seryl-[protein] + ADP + H(+). It catalyses the reaction L-threonyl-[protein] + ATP = O-phospho-L-threonyl-[protein] + ADP + H(+). Not activated by calcium. Autophosphorylation may play an important role in the regulation of the kinase activity. Stimulated by magnesium ions (optimum at 10-15 mM) and manganese ions. In terms of biological role, may play a role in signal transduction pathways that involve calcium as a second messenger. Serine/threonine kinase that phosphorylates histone H3 an GLN1-1. This Arabidopsis thaliana (Mouse-ear cress) protein is CDPK-related kinase 3 (CRK3).